Reading from the N-terminus, the 3567-residue chain is Sushi, von Willebrand factor type A, EGF and pentraxin domain-containing protein 1 (3567 aa).

An N-terminal signal peptide occupies residues 1 to 17 (MWSRLAFCCWALALVSG). The 182-residue stretch at 84 to 265 (ELVFLVDESS…LARRALHEDL (182 aa)) folds into the VWFA domain. The N-linked (GlcNAc...) asparagine glycan is linked to Asn-187. Sushi domains are found at residues 377-436 (VHCP…FCRV), 437-496 (RTCP…RCVE), and 497-561 (RHCA…VCKD). 6 disulfide bridges follow: Cys-379–Cys-421, Cys-407–Cys-434, Cys-439–Cys-481, Cys-467–Cys-494, Cys-499–Cys-544, and Cys-530–Cys-559. 2 HYR domains span residues 560 to 644 (KDVE…KVID) and 645 to 724 (VEPP…VIKG). The Sushi 4 domain occupies 725–789 (SPCEVPFTPV…YSTEWPDCAI (65 aa)). 20 cysteine pairs are disulfide-bonded: Cys-727–Cys-769, Cys-753–Cys-787, Cys-1196–Cys-1207, Cys-1201–Cys-1216, Cys-1218–Cys-1227, Cys-1234–Cys-1245, Cys-1239–Cys-1254, Cys-1256–Cys-1265, Cys-1272–Cys-1283, Cys-1277–Cys-1292, Cys-1294–Cys-1303, Cys-1310–Cys-1321, Cys-1315–Cys-1330, Cys-1332–Cys-1341, Cys-1348–Cys-1359, Cys-1353–Cys-1368, Cys-1370–Cys-1379, Cys-1386–Cys-1397, Cys-1391–Cys-1406, and Cys-1408–Cys-1417. Residues 1192-1228 (VFHECFLNPCHNSGTCQQLGRGYVCLCPPGYTGLKCE) enclose the EGF-like 1 domain. The EGF-like 2; calcium-binding domain maps to 1230 to 1266 (DIDECSSLPCLNGGICRDQVGGFTCECSLGYSGQICE). Residues 1268–1304 (NINECISSPCLNKGTCTDGLASYRCTCVKGYMGVHCE) enclose the EGF-like 3; calcium-binding domain. An EGF-like 4; calcium-binding domain is found at 1306-1342 (DVNECQSSPCLNNAVCKDQVGGFSCKCPPGFLGTRCE). One can recognise an EGF-like 5; calcium-binding domain in the interval 1344–1380 (NVDECLSQPCQNGATCKDGANSFRCQCPAGFTGTHCE). Residues 1382–1418 (NINECQSNPCRNQATCVDELNSYSCKCQPGFSGHRCE) enclose the EGF-like 6; calcium-binding domain. Residues 1423–1627 (SGFNLDFEVS…VKVDSSSMFC (205 aa)) enclose the Pentraxin (PTX) domain. Sushi domains follow at residues 1628 to 1686 (SDCP…HCER) and 1687 to 1744 (IRCG…SCLD). Disulfide bonds link Cys-1630/Cys-1671, Cys-1657/Cys-1684, Cys-1689/Cys-1729, Cys-1715/Cys-1742, Cys-1748/Cys-1760, Cys-1754/Cys-1769, Cys-1771/Cys-1782, Cys-1788/Cys-1828, Cys-1814/Cys-1841, Cys-1846/Cys-1886, Cys-1872/Cys-1899, Cys-1904/Cys-1944, Cys-1930/Cys-1957, Cys-1962/Cys-2002, Cys-1988/Cys-2015, Cys-2020/Cys-2060, Cys-2046/Cys-2077, Cys-2082/Cys-2125, Cys-2111/Cys-2140, Cys-2145/Cys-2185, Cys-2171/Cys-2198, Cys-2203/Cys-2244, Cys-2230/Cys-2258, Cys-2263/Cys-2303, Cys-2289/Cys-2317, Cys-2322/Cys-2362, Cys-2348/Cys-2375, Cys-2380/Cys-2421, Cys-2407/Cys-2434, Cys-2439/Cys-2479, Cys-2465/Cys-2492, Cys-2497/Cys-2537, Cys-2523/Cys-2550, Cys-2555/Cys-2595, and Cys-2581/Cys-2607. The EGF-like 7; calcium-binding domain maps to 1744–1783 (DVDECAVGSDCSEHASCLNTNGSYVCSCNPPYTGDGKNCA). Sushi domains follow at residues 1780–1843 (KNCA…SCEA), 1844–1901 (ISCG…VCEL), 1902–1959 (VKCS…SCQL), 1960–2017 (VSCG…QCLA), 2018–2079 (VSCD…RCIA), 2080–2142 (HFCE…QCIP), 2143–2200 (VRCG…TCHP), 2201–2260 (VSCN…SCTP), 2261–2319 (LNCG…KCVP), 2320–2377 (TKCA…ICKM), 2378–2436 (VLCP…ECVP), 2437–2494 (VECP…MCKP), 2495–2552 (IECP…SCDA), and 2553–2609 (IHCS…TCVP). An important for the interaction with integrin ITGA9:ITGB1 region spans residues 2638–2645 (DMMEVPYL). Sushi domains follow at residues 2660-2711 (NTKE…SCIS), 2712-2769 (IECD…RCEA), 2770-2827 (ISCS…MCIP), 2828-2885 (VDCG…SCMP), 2886-2943 (VRCP…VCKP), 2944-3001 (ATCG…SCLP), 3002-3057 (CRCS…LCEH), 3058-3115 (AQCG…TCEP), 3116-3174 (LSCG…TCSP), 3175-3234 (KKCP…SCIP), 3235-3292 (VVCG…VCRE), 3293-3350 (NRCE…LCKP), 3351-3409 (NPCP…RCEK), and 3410-3466 (ISCG…VCRA). 33 disulfides stabilise this stretch: Cys-2682–Cys-2709, Cys-2714–Cys-2754, Cys-2740–Cys-2767, Cys-2772–Cys-2812, Cys-2798–Cys-2825, Cys-2830–Cys-2870, Cys-2856–Cys-2883, Cys-2888–Cys-2928, Cys-2914–Cys-2941, Cys-2946–Cys-2986, Cys-2972–Cys-2999, Cys-3004–Cys-3043, Cys-3029–Cys-3055, Cys-3060–Cys-3100, Cys-3086–Cys-3113, Cys-3118–Cys-3159, Cys-3144–Cys-3172, Cys-3177–Cys-3217, Cys-3203–Cys-3232, Cys-3237–Cys-3277, Cys-3263–Cys-3290, Cys-3295–Cys-3335, Cys-3321–Cys-3348, Cys-3353–Cys-3394, Cys-3380–Cys-3407, Cys-3412–Cys-3452, Cys-3438–Cys-3464, Cys-3500–Cys-3510, Cys-3504–Cys-3516, Cys-3518–Cys-3527, Cys-3532–Cys-3542, Cys-3536–Cys-3548, and Cys-3550–Cys-3559. EGF-like domains are found at residues 3496–3528 (EEPI…SRCH) and 3529–3560 (TATC…HDCS).

As to quaternary structure, interacts (via Sushi domain 21) with ITGA9:ITGB1; thereby inhibits Ca(2+) intracellular signaling and as a result represses vasocontraction. Interacts (via Sushi domain 21) with ITGA4:ITGB1; thereby inhibits Ca(2+) intracellular signaling and as a result represses vasocontraction. Interacts with ANGPT1 and ANGPT2. Interacts with PEAR1 (via extracellular domain). Interacts with HSPG2, TLN1, FN1, COPA, CCT2, IQGAP1, LAMC1 and NID1. Interacts (via C-terminus) with TIE1. Expressed in the media layer of the arterial wall (at protein level). Highly expressed in lung and placenta, weakly expressed in the kidney, heart, brain and spleen. Also expressed in bone and periosteum, but not in cartilage and skeletal muscle.

The protein resides in the secreted. It is found in the nucleus. It localises to the cytoplasm. Its subcellular location is the membrane. Its function is as follows. Required for morphological development, cell alignment and migration of lymphatic endothelial cells during embryonic development, potentially via modulation of ANGPT2-TIE1 signaling and subsequent activation of FOXC2 transcription. Required for embryonic lymphatic vascular development, via mediating the correct formation of the first lymphovenous contact site and tight association of the lymphatic endothelium with the venous endothelium. Represses PRKCA-mediated L-type voltage-gated channel Ca(2+) influx and ROCK-mediated calcium sensitivity in vascular smooth muscle cells, via its interaction with integrins, thereby inhibiting vasocontraction. Promotes platelet activation, via its interaction with PEAR1 and subsequent activation of AKT/mTOR signaling. Plays a role in epidermal development and keratinocyte differentiation, independent of cell-cell adhesion. May play a role in initial cell attachment of stromal osteogenic cells. May promote myoblast cell adhesion when in the presence of integrin ITGA9:ITGB1. The polypeptide is Sushi, von Willebrand factor type A, EGF and pentraxin domain-containing protein 1 (Svep1) (Mus musculus (Mouse)).